Reading from the N-terminus, the 319-residue chain is D-alanine--D-alanine ligase B (319 aa).

Residues 117-312 (KRVWLSLGLP…FQQLVLAILA (196 aa)) enclose the ATP-grasp domain. ATP is bound at residue 143-198 (AQRLGFPLIVKPAHEGSSIGMAKVGGLDELIAAWREAARYDSQVLVEQWISGPEFT). Mg(2+) is bound by residues Asp266, Glu279, and Asn281.

Belongs to the D-alanine--D-alanine ligase family. It depends on Mg(2+) as a cofactor. Mn(2+) is required as a cofactor.

It localises to the cytoplasm. It catalyses the reaction 2 D-alanine + ATP = D-alanyl-D-alanine + ADP + phosphate + H(+). Its pathway is cell wall biogenesis; peptidoglycan biosynthesis. Cell wall formation. The chain is D-alanine--D-alanine ligase B from Pseudomonas aeruginosa (strain ATCC 15692 / DSM 22644 / CIP 104116 / JCM 14847 / LMG 12228 / 1C / PRS 101 / PAO1).